We begin with the raw amino-acid sequence, 299 residues long: 4-hydroxybenzoate octaprenyltransferase (299 aa).

Helical transmembrane passes span 31 to 51, 54 to 74, 105 to 125, 148 to 168, 177 to 197, 241 to 261, and 277 to 297; these read IGIY…ADGL, WDVL…GCVI, VLFF…TNPL, QLPQ…AFAA, IWVL…FYAM, FGLG…FAYQ, and FLHN…DKLI.

This sequence belongs to the UbiA prenyltransferase family. The cofactor is Mg(2+).

The protein resides in the cell inner membrane. The enzyme catalyses all-trans-octaprenyl diphosphate + 4-hydroxybenzoate = 4-hydroxy-3-(all-trans-octaprenyl)benzoate + diphosphate. It functions in the pathway cofactor biosynthesis; ubiquinone biosynthesis. Functionally, catalyzes the prenylation of para-hydroxybenzoate (PHB) with an all-trans polyprenyl group. Mediates the second step in the final reaction sequence of ubiquinone-8 (UQ-8) biosynthesis, which is the condensation of the polyisoprenoid side chain with PHB, generating the first membrane-bound Q intermediate 3-octaprenyl-4-hydroxybenzoate. In Saccharophagus degradans (strain 2-40 / ATCC 43961 / DSM 17024), this protein is 4-hydroxybenzoate octaprenyltransferase.